Here is a 219-residue protein sequence, read N- to C-terminus: Large ribosomal subunit protein uL1 (219 aa).

It belongs to the universal ribosomal protein uL1 family. Part of the 50S ribosomal subunit.

In terms of biological role, probably involved in E site tRNA release. Binds directly to 23S rRNA. Its function is as follows. Protein L1 is also a translational repressor protein, it controls the translation of its operon by binding to its mRNA. The protein is Large ribosomal subunit protein uL1 of Methanocaldococcus jannaschii (strain ATCC 43067 / DSM 2661 / JAL-1 / JCM 10045 / NBRC 100440) (Methanococcus jannaschii).